The chain runs to 25 residues: Oxyopinin-3c (25 aa).

In terms of tissue distribution, expressed by the venom gland.

Its subcellular location is the secreted. Its function is as follows. May have cytolytic and antimicrobial activity. The protein is Oxyopinin-3c of Oxyopes takobius (Lynx spider).